Here is an 84-residue protein sequence, read N- to C-terminus: Esculentin-1SIa (84 aa).

The N-terminal stretch at 1–22 (MFTLKKPLLLIVLLGIISLSLC) is a signal peptide. Residues 23 to 36 (EQERAADEDEGSEI) constitute a propeptide, removed in mature form. Cys-78 and Cys-84 are disulfide-bonded.

In terms of tissue distribution, expressed by the skin glands.

It localises to the secreted. Its function is as follows. Has antimicrobial activity against Gram-negative bacterium E.coli ATCC 8739 (MIC=6.3 ug), against Gram positive bacteria S.aureus ATCC 6538 (MIC=3.1 ug), methicillin-resistant S.aureus ATCC 43300 (MIC=25 ug) and B.subtilis ATCC 6633 (MIC=25 ug). Has no activity against fungus C.albicans ATCC 90028. This chain is Esculentin-1SIa, found in Odorrana ishikawae (Ishikawa's frog).